The chain runs to 700 residues: Calpain-2 catalytic subunit (700 aa).

Ala2 is subject to N-acetylalanine. The propeptide at 2-19 (AGIAAKLVKDREAAEGLG) is anchors to the small subunit. In terms of domain architecture, Calpain catalytic spans 45–344 (LFQDPSFPAI…YSRLEICNLT (300 aa)). 3 residues coordinate Ca(2+): Ile89, Gly91, and Asp96. Cys105 is an active-site residue. Residues Glu175, Gln229, and Lys230 each contribute to the Ca(2+) site. Residues His262 and Asn286 contribute to the active site. Ca(2+) is bound by residues Glu292, Asp299, and Glu323. The segment at 345 to 514 (PDTLTSDTYK…KKADYQAVDD (170 aa)) is domain III. The linker stretch occupies residues 515 to 529 (EIEANLEEFDISEDD). The interval 530–700 (IDDGFRRLFA…LISWLCFSVL (171 aa)) is domain IV. The Ca(2+) site is built by Ala542, Asp545, Glu547, Glu552, Asp585, Asp587, Ser589, Lys591, Glu596, Asp615, Asp617, Ser619, Thr621, Glu626, Asp658, and Asn661. 2 EF-hand domains span residues 572–605 (FSIE…TKIQ) and 602–637 (TKIQ…AGFK). The region spanning 667 to 700 (VRLETLFKIFKQLDPENTGTIELDLISWLCFSVL) is the EF-hand 3 domain.

The protein belongs to the peptidase C2 family. Forms a heterodimer with a small (regulatory) subunit (CAPNS1). Interacts with CPEB3; this leads to cleavage of CPEB3. Ca(2+) serves as cofactor.

Its subcellular location is the cytoplasm. The protein localises to the cell membrane. It carries out the reaction Broad endopeptidase specificity.. Its activity is regulated as follows. Activated by 200-1000 micromolar concentrations of calcium and inhibited by calpastatin. Functionally, calcium-regulated non-lysosomal thiol-protease which catalyzes limited proteolysis of substrates involved in cytoskeletal remodeling and signal transduction. Proteolytically cleaves MYOC at 'Arg-226'. Proteolytically cleaves CPEB3 following neuronal stimulation which abolishes CPEB3 translational repressor activity, leading to translation of CPEB3 target mRNAs. The chain is Calpain-2 catalytic subunit (CAPN2) from Macaca fascicularis (Crab-eating macaque).